A 355-amino-acid polypeptide reads, in one-letter code: Heat-inducible transcription repressor HrcA (355 aa).

It belongs to the HrcA family.

Negative regulator of class I heat shock genes (grpE-dnaK-dnaJ and groELS operons). Prevents heat-shock induction of these operons. This chain is Heat-inducible transcription repressor HrcA, found in Nitratidesulfovibrio vulgaris (strain DP4) (Desulfovibrio vulgaris).